A 423-amino-acid polypeptide reads, in one-letter code: Glutamyl-tRNA(Gln) amidotransferase subunit A (423 aa).

Active-site charge relay system residues include Lys-28 and Ser-103. Ser-127 serves as the catalytic Acyl-ester intermediate.

This sequence belongs to the amidase family. GatA subfamily. Heterotrimer of A, B and C subunits.

It carries out the reaction L-glutamyl-tRNA(Gln) + L-glutamine + ATP + H2O = L-glutaminyl-tRNA(Gln) + L-glutamate + ADP + phosphate + H(+). Functionally, allows the formation of correctly charged Gln-tRNA(Gln) through the transamidation of misacylated Glu-tRNA(Gln) in organisms which lack glutaminyl-tRNA synthetase. The reaction takes place in the presence of glutamine and ATP through an activated gamma-phospho-Glu-tRNA(Gln). The polypeptide is Glutamyl-tRNA(Gln) amidotransferase subunit A (Halobacterium salinarum (strain ATCC 700922 / JCM 11081 / NRC-1) (Halobacterium halobium)).